Consider the following 103-residue polypeptide: Phospholipase A2 large subunit (103 aa).

Ca(2+) is bound by residues Trp7, Gly9, and Gly11. Disulfide bonds link Cys8-Cys30, Cys29-Cys68, Cys36-Cys61, and Cys59-Cys96. Asn16 carries an N-linked (GlcNAc...) asparagine glycan. Residue His33 is part of the active site. Asp34 contacts Ca(2+).

The protein belongs to the phospholipase A2 family. Group III subfamily. In terms of assembly, heterodimer composed of a large subunit and a small subunit; disulfide-linked. It depends on Ca(2+) as a cofactor. As to expression, expressed by the venom gland.

It localises to the secreted. The enzyme catalyses a 1,2-diacyl-sn-glycero-3-phosphocholine + H2O = a 1-acyl-sn-glycero-3-phosphocholine + a fatty acid + H(+). Its function is as follows. Phospholipase toxin, which catalyzes the calcium-dependent hydrolysis of the 2-acyl groups in 3-sn-phosphoglycerides. Inhibits both skeletal (RYR1) and cardiac (RYR2) ryanodine receptors (calcium release channels). Probably blocks ryanodine receptors by generating a lipid product. This Chersonesometrus fulvipes (Indian black scorpion) protein is Phospholipase A2 large subunit.